Consider the following 366-residue polypeptide: Carbamoyl phosphate synthase small chain (366 aa).

Residues 1–171 form a CPSase region; it reads MQSKRYLVLE…KTPYVSTGKD (171 aa). L-glutamine-binding residues include serine 47, glycine 221, and glycine 223. A Glutamine amidotransferase type-1 domain is found at 173–360; that stretch reads SVVLVDFGKK…VAMMTNFKEK (188 aa). Cysteine 248 serves as the catalytic Nucleophile. Leucine 249, glutamine 252, asparagine 290, glycine 292, and tyrosine 293 together coordinate L-glutamine. Catalysis depends on residues histidine 333 and glutamate 335.

It belongs to the CarA family. As to quaternary structure, composed of two chains; the small (or glutamine) chain promotes the hydrolysis of glutamine to ammonia, which is used by the large (or ammonia) chain to synthesize carbamoyl phosphate. Tetramer of heterodimers (alpha,beta)4.

It carries out the reaction hydrogencarbonate + L-glutamine + 2 ATP + H2O = carbamoyl phosphate + L-glutamate + 2 ADP + phosphate + 2 H(+). The catalysed reaction is L-glutamine + H2O = L-glutamate + NH4(+). It participates in amino-acid biosynthesis; L-arginine biosynthesis; carbamoyl phosphate from bicarbonate: step 1/1. It functions in the pathway pyrimidine metabolism; UMP biosynthesis via de novo pathway; (S)-dihydroorotate from bicarbonate: step 1/3. In terms of biological role, small subunit of the glutamine-dependent carbamoyl phosphate synthetase (CPSase). CPSase catalyzes the formation of carbamoyl phosphate from the ammonia moiety of glutamine, carbonate, and phosphate donated by ATP, constituting the first step of 2 biosynthetic pathways, one leading to arginine and/or urea and the other to pyrimidine nucleotides. The small subunit (glutamine amidotransferase) binds and cleaves glutamine to supply the large subunit with the substrate ammonia. This chain is Carbamoyl phosphate synthase small chain, found in Staphylococcus aureus (strain COL).